The following is an 808-amino-acid chain: Probable inorganic carbon transporter subunit DabA (808 aa).

Residues cysteine 335, aspartate 337, histidine 497, and cysteine 512 each contribute to the Zn(2+) site.

The protein belongs to the inorganic carbon transporter (TC 9.A.2) DabA family. As to quaternary structure, forms a complex with DabB. It depends on Zn(2+) as a cofactor.

The protein resides in the cell inner membrane. In terms of biological role, part of an energy-coupled inorganic carbon pump. The chain is Probable inorganic carbon transporter subunit DabA from Rhodopseudomonas palustris (strain TIE-1).